The following is a 154-amino-acid chain: Transcriptional repressor NrdR (154 aa).

The segment at 3-34 (CPYCQSEDTQVKDSRPAEDGAAIRRRRACPVC) is a zinc-finger region. The region spanning 49-139 (LVVVKRTGRK…VYRNFREAKD (91 aa)) is the ATP-cone domain.

It belongs to the NrdR family. It depends on Zn(2+) as a cofactor.

Functionally, negatively regulates transcription of bacterial ribonucleotide reductase nrd genes and operons by binding to NrdR-boxes. This Chelativorans sp. (strain BNC1) protein is Transcriptional repressor NrdR.